The sequence spans 649 residues: FAS-associated factor 1 (649 aa).

One can recognise a UBA domain in the interval 1 to 57 (MASNMDREMILADFQACTGIENIDEAITLLEQNNWDLVAAINGVIPQENGILQSDFG). A disordered region spans residues 55–84 (DFGGETMPGPTFDPASPPAPAPAPSSSAFR). Ser-319 is subject to Phosphoserine. Positions 568–645 (NAEPVSKLRI…NLFPQETLFL (78 aa)) constitute a UBX domain. Thr-579 carries the post-translational modification Phosphothreonine. Ser-581 is subject to Phosphoserine.

As to quaternary structure, interacts with CDT1 and ATPase VCP/p97. Interacts (via UBA domain) with FAS (via death domain). Interacts (via UBA domain) with NLRP12 (via DAPIN/PYRIN domain). Central nervous system.

Its subcellular location is the nucleus. Its function is as follows. Ubiquitin-binding protein. Required for the progression of DNA replication forks by targeting DNA replication licensing factor CDT1 for degradation. Potentiates but cannot initiate FAS-induced apoptosis. The protein is FAS-associated factor 1 (Faf1) of Rattus norvegicus (Rat).